A 532-amino-acid polypeptide reads, in one-letter code: Fatty-acid amide hydrolase 2-A (532 aa).

A helical membrane pass occupies residues 9 to 29 (FLGRLLRAVVWILFAAFKLFA). Residues Lys129 and Ser204 each act as charge relay system in the active site. The active-site Acyl-ester intermediate is the Ser228.

This sequence belongs to the amidase family.

It localises to the membrane. It catalyses the reaction N-(5Z,8Z,11Z,14Z-eicosatetraenoyl)-ethanolamine + H2O = ethanolamine + (5Z,8Z,11Z,14Z)-eicosatetraenoate. The enzyme catalyses (9Z)-octadecenamide + H2O = (9Z)-octadecenoate + NH4(+). The protein is Fatty-acid amide hydrolase 2-A (faah2a) of Danio rerio (Zebrafish).